The sequence spans 72 residues: UPF0154 protein EF_1734 (72 aa).

Residues 4–26 form a helical membrane-spanning segment; sequence GWVVLIAVIALLVGAAGGFFLAR.

The protein belongs to the UPF0154 family.

It localises to the membrane. This chain is UPF0154 protein EF_1734, found in Enterococcus faecalis (strain ATCC 700802 / V583).